A 997-amino-acid polypeptide reads, in one-letter code: Kinesin-like protein KIF19 (997 aa).

The Kinesin motor domain occupies glutamine 11–isoleucine 346. Glycine 104 to threonine 111 serves as a coordination point for ATP. The stretch at isoleucine 361 to arginine 388 forms a coiled coil. The span at glutamate 477–aspartate 494 shows a compositional bias: basic and acidic residues. Disordered stretches follow at residues glutamate 477 to serine 509, lysine 665 to serine 704, glutamine 718 to asparagine 759, and alanine 784 to asparagine 997. Residues glutamate 506–arginine 551 are a coiled coil. The segment covering lysine 683–leucine 697 has biased composition (polar residues). The segment covering isoleucine 750–asparagine 759 has biased composition (low complexity). Polar residues-rich tracts occupy residues threonine 835–glutamate 851 and proline 950–proline 959.

Belongs to the TRAFAC class myosin-kinesin ATPase superfamily. Kinesin family. Strongly expressed in the oviduct and trachea. Expressed in testis, lung, ovary and brain.

It localises to the cytoplasm. The protein localises to the cytoskeleton. The protein resides in the cell projection. Its subcellular location is the cilium. Plus end-directed microtubule-dependent motor protein that regulates the length of motile cilia by mediating depolymerization of microtubules at ciliary tips. The protein is Kinesin-like protein KIF19 (Kif19) of Mus musculus (Mouse).